The primary structure comprises 175 residues: Interleukin-10 (175 aa).

Residues 1-18 (MPSSALLYCLIFLAGVAA) form the signal peptide. Intrachain disulfides connect Cys26–Cys122 and Cys76–Cys128. A glycan (N-linked (GlcNAc...) asparagine) is linked at Asn130.

Belongs to the IL-10 family. In terms of assembly, homodimer. Interacts with IL10RA and IL10RB.

The protein localises to the secreted. Its function is as follows. Major immune regulatory cytokine that acts on many cells of the immune system where it has profound anti-inflammatory functions, limiting excessive tissue disruption caused by inflammation. Mechanistically, IL10 binds to its heterotetrameric receptor comprising IL10RA and IL10RB leading to JAK1 and STAT2-mediated phosphorylation of STAT3. In turn, STAT3 translocates to the nucleus where it drives expression of anti-inflammatory mediators. Targets antigen-presenting cells (APCs) such as macrophages and monocytes and inhibits their release of pro-inflammatory cytokines including granulocyte-macrophage colony-stimulating factor /GM-CSF, granulocyte colony-stimulating factor/G-CSF, IL-1 alpha, IL-1 beta, IL-6, IL-8 and TNF-alpha. Also interferes with antigen presentation by reducing the expression of MHC-class II and co-stimulatory molecules, thereby inhibiting their ability to induce T cell activation. In addition, controls the inflammatory response of macrophages by reprogramming essential metabolic pathways including mTOR signaling. The protein is Interleukin-10 (IL10) of Sus scrofa (Pig).